Here is a 401-residue protein sequence, read N- to C-terminus: Acetate kinase (401 aa).

N7 is a binding site for Mg(2+). Position 14 (K14) interacts with ATP. R91 is a substrate binding site. The Proton donor/acceptor role is filled by D148. ATP contacts are provided by residues 208–212 (HLGNG), 283–285 (DFR), and 331–335 (GVGEN). E384 serves as a coordination point for Mg(2+).

Belongs to the acetokinase family. As to quaternary structure, homodimer. It depends on Mg(2+) as a cofactor. Mn(2+) serves as cofactor.

It localises to the cytoplasm. The enzyme catalyses acetate + ATP = acetyl phosphate + ADP. Its pathway is metabolic intermediate biosynthesis; acetyl-CoA biosynthesis; acetyl-CoA from acetate: step 1/2. Catalyzes the formation of acetyl phosphate from acetate and ATP. Can also catalyze the reverse reaction. This chain is Acetate kinase, found in Helicobacter hepaticus (strain ATCC 51449 / 3B1).